The chain runs to 377 residues: tRNA-specific 2-thiouridylase MnmA (377 aa).

ATP is bound by residues Gly16–Ser23 and Met42. The tract at residues Asn102–Asp104 is interaction with target base in tRNA. The active-site Nucleophile is Cys107. Cysteines 107 and 204 form a disulfide. Position 131 (Gly131) interacts with ATP. The interaction with tRNA stretch occupies residues Lys154–Gln156. Cys204 (cysteine persulfide intermediate) is an active-site residue. Positions Arg315–Tyr316 are interaction with tRNA.

The protein belongs to the MnmA/TRMU family.

It is found in the cytoplasm. The enzyme catalyses S-sulfanyl-L-cysteinyl-[protein] + uridine(34) in tRNA + AH2 + ATP = 2-thiouridine(34) in tRNA + L-cysteinyl-[protein] + A + AMP + diphosphate + H(+). Functionally, catalyzes the 2-thiolation of uridine at the wobble position (U34) of tRNA, leading to the formation of s(2)U34. In Lacticaseibacillus paracasei (strain ATCC 334 / BCRC 17002 / CCUG 31169 / CIP 107868 / KCTC 3260 / NRRL B-441) (Lactobacillus paracasei), this protein is tRNA-specific 2-thiouridylase MnmA.